A 374-amino-acid chain; its full sequence is 2,7-anhydro-N-acetylneuraminate hydratase (374 aa).

NAD(+)-binding residues include Y13, F14, D35, N38, T70, N72, H75, E92, K93, W162, and K163.

Belongs to the Gfo/Idh/MocA family. Homodimer. It depends on NAD(+) as a cofactor.

It carries out the reaction N-acetyl-2,7-anhydro-alpha-neuraminate + H2O = N-acetyl-alpha-neuraminate. Its activity is regulated as follows. Neu5Ac is produced in the presence of NAD(+) or NADH, but not in the presence of FAD. Functionally, hydratase involved in the degradation of sialic acids, which are present in the host mucus layer and represent a much-coveted source of nutrients for R.gnavus, a prevalent member of the normal gut microbiota. Catalyzes the reversible conversion of the dehydrated form of N-acetylneuraminate (Neu5Ac), 2,7-anhydro-N-acetylneuraminate (2,7-AN), to Neu5Ac, allowing growth on 2,7-AN produced by the IT-sialidase NanH. Acts through a multistep mechanism involving a keto intermediate and cycling of NADH/NAD(+). In Mediterraneibacter gnavus (strain ATCC 29149 / DSM 114966 / JCM 6515 / VPI C7-9) (Ruminococcus gnavus), this protein is 2,7-anhydro-N-acetylneuraminate hydratase.